Here is a 513-residue protein sequence, read N- to C-terminus: 2-isopropylmalate synthase (513 aa).

In terms of domain architecture, Pyruvate carboxyltransferase spans 5–268 (LIIFDTTLRD…DIGVDTTQIV (264 aa)). Residues D14, H202, H204, and N239 each coordinate Mn(2+). The tract at residues 394-513 (RFISLSQRSE…KAVQKINPQI (120 aa)) is regulatory domain.

This sequence belongs to the alpha-IPM synthase/homocitrate synthase family. LeuA type 1 subfamily. In terms of assembly, homodimer. It depends on Mn(2+) as a cofactor.

It is found in the cytoplasm. It catalyses the reaction 3-methyl-2-oxobutanoate + acetyl-CoA + H2O = (2S)-2-isopropylmalate + CoA + H(+). The protein operates within amino-acid biosynthesis; L-leucine biosynthesis; L-leucine from 3-methyl-2-oxobutanoate: step 1/4. Functionally, catalyzes the condensation of the acetyl group of acetyl-CoA with 3-methyl-2-oxobutanoate (2-ketoisovalerate) to form 3-carboxy-3-hydroxy-4-methylpentanoate (2-isopropylmalate). In Cupriavidus necator (strain ATCC 17699 / DSM 428 / KCTC 22496 / NCIMB 10442 / H16 / Stanier 337) (Ralstonia eutropha), this protein is 2-isopropylmalate synthase.